The following is a 663-amino-acid chain: UvrABC system protein B (663 aa).

In terms of domain architecture, Helicase ATP-binding spans 30–414 (EGIKAGKRHQ…IEHTDKMVEQ (385 aa)). Residue 43–50 (GATGTGKT) coordinates ATP. The Beta-hairpin motif lies at 96-119 (YYDYYQPEAYVPSTDTFIEKDASI). Residues 434–600 (QIDDLLSEIQ…TINKKIHDLI (167 aa)) enclose the Helicase C-terminal domain. One can recognise a UVR domain in the interval 627-662 (QKTIDNIEKEMKQAAKDLDFEKATELRDMLFELKAE).

It belongs to the UvrB family. In terms of assembly, forms a heterotetramer with UvrA during the search for lesions. Interacts with UvrC in an incision complex.

It is found in the cytoplasm. Functionally, the UvrABC repair system catalyzes the recognition and processing of DNA lesions. A damage recognition complex composed of 2 UvrA and 2 UvrB subunits scans DNA for abnormalities. Upon binding of the UvrA(2)B(2) complex to a putative damaged site, the DNA wraps around one UvrB monomer. DNA wrap is dependent on ATP binding by UvrB and probably causes local melting of the DNA helix, facilitating insertion of UvrB beta-hairpin between the DNA strands. Then UvrB probes one DNA strand for the presence of a lesion. If a lesion is found the UvrA subunits dissociate and the UvrB-DNA preincision complex is formed. This complex is subsequently bound by UvrC and the second UvrB is released. If no lesion is found, the DNA wraps around the other UvrB subunit that will check the other stand for damage. This Staphylococcus aureus (strain MSSA476) protein is UvrABC system protein B.